The sequence spans 261 residues: Beta cell expansion factor A (261 aa).

A signal peptide spans 1–21 (MNKRNWLLALSLSLAFSPCYA). Residues 99–261 (KTAKEARIAI…IDKDLTETSR (163 aa)) form an SYLF domain region.

Its subcellular location is the secreted. The protein localises to the host. Functionally, stimulates the proliferation of insulin-producing beta cells during development in gnotobiotic zebrafish and mice. BefA is a microbiome-derived protein that traffics from the host intestinal lumen to the pancreas to act directly on pancreatic islets. In pancreas, interacts directly with host beta cells and elicits their proliferation via a mechanism of increasing membrane permeabilization. Can also permeabilize bacterial cell membranes, but does not show killing of target bacteria. This chain is Beta cell expansion factor A, found in Aeromonas veronii.